The sequence spans 227 residues: 3,4-dihydroxy-2-butanone 4-phosphate synthase (227 aa).

D-ribulose 5-phosphate contacts are provided by residues 45–46 (RE), aspartate 50, 158–162 (RRGHT), and glutamate 182. Glutamate 46 lines the Mg(2+) pocket. A Mg(2+)-binding site is contributed by histidine 161.

Belongs to the DHBP synthase family. As to quaternary structure, homodimer. The cofactor is Mg(2+). Requires Mn(2+) as cofactor.

The enzyme catalyses D-ribulose 5-phosphate = (2S)-2-hydroxy-3-oxobutyl phosphate + formate + H(+). The protein operates within cofactor biosynthesis; riboflavin biosynthesis; 2-hydroxy-3-oxobutyl phosphate from D-ribulose 5-phosphate: step 1/1. Catalyzes the conversion of D-ribulose 5-phosphate to formate and 3,4-dihydroxy-2-butanone 4-phosphate. This Ralstonia nicotianae (strain ATCC BAA-1114 / GMI1000) (Ralstonia solanacearum) protein is 3,4-dihydroxy-2-butanone 4-phosphate synthase.